Reading from the N-terminus, the 916-residue chain is DNA mismatch repair protein MutS (916 aa).

665 to 672 (GPNMAGKS) lines the ATP pocket.

Belongs to the DNA mismatch repair MutS family.

In terms of biological role, this protein is involved in the repair of mismatches in DNA. It is possible that it carries out the mismatch recognition step. This protein has a weak ATPase activity. This Bradyrhizobium sp. (strain ORS 278) protein is DNA mismatch repair protein MutS.